We begin with the raw amino-acid sequence, 1406 residues long: DNA topoisomerase 2 (1406 aa).

ATP contacts are provided by residues N69, N98, 126–128, and 139–146; these read SSN and GRNGYGAK. The interval 332-334 is interaction with DNA; it reads KKK. An ATP-binding site is contributed by 363–365; that stretch reads QTK. Residues 441-555 enclose the Toprim domain; the sequence is CTLILTEGDS…GLLDIPGFLI (115 aa). E447, D524, and D526 together coordinate Mg(2+). The Topo IIA-type catalytic domain occupies 690–1159; the sequence is IPSVLDGFKP…SAKDLWNNDL (470 aa). Residue Y780 is the O-(5'-phospho-DNA)-tyrosine intermediate of the active site. The segment at 963–972 is interaction with DNA; it reads KLISPISLQN. A compositionally biased stretch (acidic residues) spans 1079 to 1089; that stretch reads EDEDEDLEESE. 4 disordered regions span residues 1079–1106, 1183–1215, 1230–1287, and 1303–1406; these read EDED…VNGP, KTKG…KKIK, KIKA…DESG, and DEDA…FNDE. The span at 1090–1100 shows a compositional bias: basic and acidic residues; that stretch reads EATRKKDKDDE. The segment covering 1204–1214 has biased composition (basic residues); the sequence is KKKPARRIKKI. Residues 1261–1274 are compositionally biased toward polar residues; the sequence is DVTSNASTPSTTIF. Positions 1326 to 1336 are enriched in basic residues; it reads AKKKAPPKRKA. Composition is skewed to acidic residues over residues 1341–1359 and 1381–1406; these read SSED…DEEV and EISD…FNDE.

This sequence belongs to the type II topoisomerase family. In terms of assembly, homodimer. Mg(2+) serves as cofactor. It depends on Mn(2+) as a cofactor. The cofactor is Ca(2+).

It is found in the nucleus. The enzyme catalyses ATP-dependent breakage, passage and rejoining of double-stranded DNA.. In terms of biological role, control of topological states of DNA by transient breakage and subsequent rejoining of DNA strands. Topoisomerase II makes double-strand breaks. The chain is DNA topoisomerase 2 (TOP2) from Candida glabrata (strain ATCC 2001 / BCRC 20586 / JCM 3761 / NBRC 0622 / NRRL Y-65 / CBS 138) (Yeast).